Consider the following 113-residue polypeptide: UPF0122 protein Sez_1013 (113 aa).

It belongs to the UPF0122 family.

Its function is as follows. Might take part in the signal recognition particle (SRP) pathway. This is inferred from the conservation of its genetic proximity to ftsY/ffh. May be a regulatory protein. The sequence is that of UPF0122 protein Sez_1013 from Streptococcus equi subsp. zooepidemicus (strain MGCS10565).